We begin with the raw amino-acid sequence, 1228 residues long: MEEVIKNAHTYDVEDVLKFLDVNKDNGLKNEELDDRRLKYGLNELEVEKKKSIFELILNQFDDLLVKILLLAAFISFVLTLLDMKHKKIEICDFIEPLVIVLILILNAAVGVWQECNAEKSLEALKELQPTKAKVLRDGKWEIIDSKYLYVGDIIELSVGNKTPADARIIKIYSTSLKVEQSMLTGESCSVDKYAEKMEDSYKNCEIQLKKNILFSSTAIVCGRCIAVVINIGMKTEIGHIQHAVIESNSEDTQTPLQIKIDLFGQQLSKIIFVICVTVWIINFKHFSDPIHGSFLYGCLYYFKISVALAVAAIPEGLPAVITTCLALGTRRMVKKNAIVRKLQSVETLGCTTVICSDKTGTLTTNQMTTTVFHLFRESDSLTEYQLCQKGDTYYFYESSNLTNDIYAGESSFFNKLKDEGNVEALTDDGEEGSIDEADPYSDYFSSDSKKMKNDLNNNNNNNNNSSRSGAKRNIPLKEMKSNENTIISRGSKILEDKINKYCYSEYDYNFYMCLVNCNEANIFCNDNSQIVKKFGDSTELALLHFVHNFDILPTFSKNNKMPAEYEKNTTPVQSSNKKDKSPRGINKFFSSKNDNSHITSTLNENDKNLKNANHSNYTTAQATTNGYEAIGENTFEHGTSFENCFHSKLGNKINTTSTHNNNNNNNNNSNSVPSECISSWRNECKQIKIIEFTRERKLMSVIVENKKKEIILYCKGAPENIIKNCKYYLTKNDIRPLNETLKNEIHNKIQNMGKRALRTLSFAYKKLSSKDLNIKNTDDYYKLEQDLIYLGGLGIIDPPRKYVGRAIRLCHMAGIRVFMITGDNINTARAIAKEINILNKNEGDDEKDNYTNNKNTQICCYNGREFEDFSLEKQKHILKNTPRIVFCRTEPKHKKQIVKVLKDLGETVAMTGDGVNDAPALKSADIGIAMGINGTEVAKEASDIVLADDNFNTIVEAIKEGRCIYNNMKAFIRYLISSNIGEVASIFITALLGIPDSLAPVQLLWVNLVTDGLPATALGFNPPEHDVMKCKPRHKNDNLINGLTLLRYIIIGTYVGIATVSIFVYWFLFYPDSDMHTLINFYQLSHYNQCKAWNNFRVNKVYDMSEDHCSYFSAGKIKASTLSLSVLVLIEMFNALNALSEYNSLFEIPPWRNMYLVLATIGSLLLHVLILYIPPLARIFGVVPLSAYDWFLVFLWSFPVIILDEIIKFYAKRKLKEEQRTKKIKID.

Residues 1-63 (MEEVIKNAHT…FELILNQFDD (63 aa)) are Cytoplasmic-facing. A helical transmembrane segment spans residues 64 to 81 (LLVKILLLAAFISFVLTL). At 82–92 (LDMKHKKIEIC) the chain is on the extracellular side. Residues 93 to 112 (DFIEPLVIVLILILNAAVGV) traverse the membrane as a helical segment. Topologically, residues 113–270 (WQECNAEKSL…IDLFGQQLSK (158 aa)) are cytoplasmic. A helical membrane pass occupies residues 271–291 (IIFVICVTVWIINFKHFSDPI). Residues 292–300 (HGSFLYGCL) are Extracellular-facing. Residues 301–321 (YYFKISVALAVAAIPEGLPAV) form a helical membrane-spanning segment. The Cytoplasmic segment spans residues 322-974 (ITTCLALGTR…IYNNMKAFIR (653 aa)). Asp358 (4-aspartylphosphate intermediate) is an active-site residue. Disordered stretches follow at residues 452–478 (MKNDLNNNNNNNNNSSRSGAKRNIPLK) and 562–613 (MPAE…LKNA). A compositionally biased stretch (polar residues) spans 589-604 (FFSSKNDNSHITSTLN). Lys716 serves as a coordination point for ATP. Residues 975–994 (YLISSNIGEVASIFITALLG) form a helical membrane-spanning segment. The Extracellular segment spans residues 995–1000 (IPDSLA). Residues 1001 to 1021 (PVQLLWVNLVTDGLPATALGF) form a helical membrane-spanning segment. Residues 1022–1042 (NPPEHDVMKCKPRHKNDNLIN) are Cytoplasmic-facing. A helical membrane pass occupies residues 1043 to 1067 (GLTLLRYIIIGTYVGIATVSIFVYW). Topologically, residues 1068–1118 (FLFYPDSDMHTLINFYQLSHYNQCKAWNNFRVNKVYDMSEDHCSYFSAGKI) are extracellular. Residues 1119 to 1140 (KASTLSLSVLVLIEMFNALNAL) traverse the membrane as a helical segment. Residues 1141–1151 (SEYNSLFEIPP) lie on the Cytoplasmic side of the membrane. A helical transmembrane segment spans residues 1152–1172 (WRNMYLVLATIGSLLLHVLIL). The Extracellular segment spans residues 1173–1185 (YIPPLARIFGVVP). The chain crosses the membrane as a helical span at residues 1186 to 1206 (LSAYDWFLVFLWSFPVIILDE). Over 1207-1228 (IIKFYAKRKLKEEQRTKKIKID) the chain is Cytoplasmic.

Belongs to the cation transport ATPase (P-type) (TC 3.A.3) family.

The protein resides in the membrane. It carries out the reaction Ca(2+)(in) + ATP + H2O = Ca(2+)(out) + ADP + phosphate + H(+). Its function is as follows. This magnesium-dependent enzyme catalyzes the hydrolysis of ATP coupled with the transport of the calcium. This is Calcium-transporting ATPase (ATP6) from Plasmodium falciparum (isolate K1 / Thailand).